Consider the following 228-residue polypeptide: 2-C-methyl-D-erythritol 4-phosphate cytidylyltransferase (228 aa).

The protein belongs to the IspD/TarI cytidylyltransferase family. IspD subfamily.

The catalysed reaction is 2-C-methyl-D-erythritol 4-phosphate + CTP + H(+) = 4-CDP-2-C-methyl-D-erythritol + diphosphate. It functions in the pathway isoprenoid biosynthesis; isopentenyl diphosphate biosynthesis via DXP pathway; isopentenyl diphosphate from 1-deoxy-D-xylulose 5-phosphate: step 2/6. Functionally, catalyzes the formation of 4-diphosphocytidyl-2-C-methyl-D-erythritol from CTP and 2-C-methyl-D-erythritol 4-phosphate (MEP). The protein is 2-C-methyl-D-erythritol 4-phosphate cytidylyltransferase of Actinobacillus pleuropneumoniae serotype 5b (strain L20).